A 1378-amino-acid polypeptide reads, in one-letter code: DNA-directed RNA polymerase subunit beta (1378 aa).

The protein belongs to the RNA polymerase beta chain family. The RNAP catalytic core consists of 2 alpha, 1 beta, 1 beta' and 1 omega subunit. When a sigma factor is associated with the core the holoenzyme is formed, which can initiate transcription.

It carries out the reaction RNA(n) + a ribonucleoside 5'-triphosphate = RNA(n+1) + diphosphate. Its function is as follows. DNA-dependent RNA polymerase catalyzes the transcription of DNA into RNA using the four ribonucleoside triphosphates as substrates. This chain is DNA-directed RNA polymerase subunit beta, found in Hyphomonas neptunium (strain ATCC 15444).